The chain runs to 404 residues: Histidine--tRNA ligase (404 aa).

It belongs to the class-II aminoacyl-tRNA synthetase family.

The protein resides in the cytoplasm. It catalyses the reaction tRNA(His) + L-histidine + ATP = L-histidyl-tRNA(His) + AMP + diphosphate + H(+). The sequence is that of Histidine--tRNA ligase from Nanoarchaeum equitans (strain Kin4-M).